Consider the following 501-residue polypeptide: Glycerol kinase (501 aa).

Residue Thr14 coordinates ADP. Positions 14, 15, and 16 each coordinate ATP. A sn-glycerol 3-phosphate-binding site is contributed by Thr14. ADP is bound at residue Arg18. 4 residues coordinate sn-glycerol 3-phosphate: Arg84, Glu85, Tyr135, and Asp244. Glycerol-binding residues include Arg84, Glu85, Tyr135, Asp244, and Gln245. The ADP site is built by Thr266 and Gly309. Residues Thr266, Gly309, Gln313, and Gly410 each contribute to the ATP site. Residues Gly410 and Asn414 each coordinate ADP.

It belongs to the FGGY kinase family.

The enzyme catalyses glycerol + ATP = sn-glycerol 3-phosphate + ADP + H(+). The protein operates within polyol metabolism; glycerol degradation via glycerol kinase pathway; sn-glycerol 3-phosphate from glycerol: step 1/1. With respect to regulation, inhibited by fructose 1,6-bisphosphate (FBP). Functionally, key enzyme in the regulation of glycerol uptake and metabolism. Catalyzes the phosphorylation of glycerol to yield sn-glycerol 3-phosphate. The protein is Glycerol kinase of Deinococcus radiodurans (strain ATCC 13939 / DSM 20539 / JCM 16871 / CCUG 27074 / LMG 4051 / NBRC 15346 / NCIMB 9279 / VKM B-1422 / R1).